The primary structure comprises 419 residues: Zinc metalloproteinase-disintegrin-like atrolysin-A (419 aa).

The Peptidase M12B domain maps to 6 to 202 (RYVELVIVAD…YNPQCILNEP (197 aa)). Residue E9 participates in Ca(2+) binding. The N-linked (GlcNAc...) asparagine glycan is linked to N72. D93 is a Ca(2+) binding site. 3 disulfide bridges follow: C117–C197, C157–C181, and C159–C164. Position 142 (H142) interacts with Zn(2+). Residue E143 is part of the active site. Zn(2+) is bound by residues H146 and H152. Ca(2+)-binding residues include C197, N200, V212, N215, L217, E219, E222, and D225. Residues 210-296 (PPVCGNELLE…DCPTDDFHRN (87 aa)) form the Disintegrin domain. Intrachain disulfides connect C213–C242, C224–C237, C226–C232, C236–C259, C250–C256, C255–C281, C268–C288, C275–C307, C300–C312, C319–C369, C334–C376, C347–C357, C364–C398, and C392–C403. The D/ECD-tripeptide signature appears at 274-276 (ECD). N-linked (GlcNAc...) asparagine glycosylation is found at N326, N338, and N342.

It belongs to the venom metalloproteinase (M12B) family. P-III subfamily. P-IIIa sub-subfamily. As to quaternary structure, monomer. Zn(2+) is required as a cofactor. As to expression, expressed by the venom gland.

It is found in the secreted. It carries out the reaction Cleavage of 3-Asn-|-Gln-4, 5-His-|-Leu-6, 10-His-|-Leu-11, 14-Ala-|-Leu-15 and 16-Tyr-|-Leu-17 in insulin B chain. Removes C-terminal Leu from small peptides.. Functionally, snake venom zinc metalloproteinase-disintegrin that causes hemorrhage by provoking the degradation of the sub-endothelial matrix proteins (fibronectin, laminin, type IV collagen, nidogen, and gelatins) and disturbances in platelet function. The recombinant cysteine-rich domain interacts with the alpha-2/beta-1 integrin (ITGA2/ITGB1) (collagen receptor), and inhibits the platelet aggregation induced by collagen. This is Zinc metalloproteinase-disintegrin-like atrolysin-A from Crotalus atrox (Western diamondback rattlesnake).